The sequence spans 253 residues: Low affinity immunoglobulin gamma Fc region receptor III-A (253 aa).

A signal peptide spans 1 to 20 (MGQPLPPVALLLLVSASSRA). Topologically, residues 21–207 (ADVPKALVLL…ISSSVLPWHQ (187 aa)) are extracellular. 2 consecutive Ig-like C2-type domains span residues 24 to 90 (PKAL…YRCQ) and 99 to 189 (PVQL…VTIT). Disulfide bonds link C47–C89 and C128–C172. N-linked (GlcNAc...) asparagine glycans are attached at residues N56, N63, N165, and N180. A helical transmembrane segment spans residues 208 to 226 (IAFCLVMGLLLAADTGLYF). Topologically, residues 227-253 (SVQRDLRSSQRARKEHTLGWSLGSQDK) are cytoplasmic.

Forms a heterooligomeric complex with ITAM-containing signaling subunits FCER1G. Interacts (via transmembrane domain) with signaling subunits; this interaction is a prerequisite for receptor complex expression on the cell surface and intracellular signal transduction. Binds the Fc region of antigen-complexed IgG.

It localises to the cell membrane. In terms of biological role, receptor for the invariable Fc fragment of immunoglobulin gamma (IgG). Optimally activated upon binding of clustered antigen-IgG complexes displayed on cell surfaces, triggers lysis of antibody-coated cells, a process known as antibody-dependent cellular cytotoxicity (ADCC). Does not bind free monomeric IgG, thus avoiding inappropriate effector cell activation in the absence of antigenic trigger. Mediates IgG effector functions on natural killer (NK) cells. Binds antigen-IgG complexes generated upon infection and triggers NK cell-dependent cytokine production and degranulation to limit viral load and propagation. Fc-binding subunit that associates with FCER1G adapter to form functional signaling complexes. Following the engagement of antigen-IgG complexes, triggers phosphorylation of immunoreceptor tyrosine-based activation motif (ITAM)-containing adapters with subsequent activation of phosphatidylinositol 3-kinase signaling and sustained elevation of intracellular calcium that ultimately drive NK cell activation. Mediates enhanced ADCC in response to afucosylated IgGs. The chain is Low affinity immunoglobulin gamma Fc region receptor III-A from Oryctolagus cuniculus (Rabbit).